The primary structure comprises 1680 residues: GRIP and coiled-coil domain-containing protein 2 (1680 aa).

M1 carries the N-acetylmethionine modification. Positions 1–14 (MEDSAPDAVAAAPS) are enriched in low complexity. Disordered stretches follow at residues 1-23 (MEDSAPDAVAAAPSGTPKSKLET) and 1468-1522 (KSEP…SSAG). A coiled-coil region spans residues 31–1614 (KFAKKQMMLL…REKSVANLEY (1584 aa)). The span at 1469–1484 (SEPSTRSPASSHQPSK) shows a compositional bias: polar residues. A phosphoserine mark is found at S1475 and S1479. The mediates interaction with RAB6A stretch occupies residues 1570 to 1609 (HLNGLLRETEATNAILMEQIKLLKSEIRRLERNQEREKSV). The mediates interaction with RAB9A stretch occupies residues 1570-1680 (HLNGLLRETE…SYLHSWSGLR (111 aa)). One can recognise a GRIP domain in the interval 1605–1655 (REKSVANLEYLKNVLLRFIFLKPGSERERLLPVIDTMLQLSPEEKGKLATV).

In terms of assembly, homodimer. Interacts (via GRIP domain) with RAB6A (preferentially in its GTP-bound form). May interact (RAB6A-dependent) with ARL1; might be involved in GCC2 Golgi localization. Interacts (probably via GRIP domain) with RAB9A (preferentially in its GTP-bound form). Interacts with CLASP1 and CLASP2; recruits both proteins to membranes of the TGN. Interacts with STX16.

The protein localises to the cytoplasm. The protein resides in the golgi apparatus. Its subcellular location is the trans-Golgi network membrane. Functionally, golgin which probably tethers transport vesicles to the trans-Golgi network (TGN) and regulates vesicular transport between the endosomes and the Golgi. As a RAB9A effector it is involved in recycling of the mannose 6-phosphate receptor from the late endosomes to the TGN. May also play a role in transport between the recycling endosomes and the Golgi. Required for maintenance of the Golgi structure, it is involved in the biogenesis of noncentrosomal, Golgi-associated microtubules through recruitment of CLASP1 and CLASP2. The sequence is that of GRIP and coiled-coil domain-containing protein 2 (Gcc2) from Mus musculus (Mouse).